Here is a 209-residue protein sequence, read N- to C-terminus: Uracil phosphoribosyltransferase (209 aa).

Residues Arg79, Arg104, and 131-139 (DPMLATGGS) each bind 5-phospho-alpha-D-ribose 1-diphosphate. Uracil-binding positions include Ile194 and 199–201 (GDA). Residue Asp200 participates in 5-phospho-alpha-D-ribose 1-diphosphate binding.

This sequence belongs to the UPRTase family. It depends on Mg(2+) as a cofactor.

The enzyme catalyses UMP + diphosphate = 5-phospho-alpha-D-ribose 1-diphosphate + uracil. Its pathway is pyrimidine metabolism; UMP biosynthesis via salvage pathway; UMP from uracil: step 1/1. Its activity is regulated as follows. Allosterically activated by GTP. Catalyzes the conversion of uracil and 5-phospho-alpha-D-ribose 1-diphosphate (PRPP) to UMP and diphosphate. In Enterococcus faecalis (strain ATCC 700802 / V583), this protein is Uracil phosphoribosyltransferase.